The primary structure comprises 364 residues: Methylthioribose-1-phosphate isomerase (364 aa).

Aspartate 246 serves as the catalytic Proton donor.

It belongs to the eIF-2B alpha/beta/delta subunits family. MtnA subfamily.

The protein resides in the cytoplasm. It localises to the nucleus. It catalyses the reaction 5-(methylsulfanyl)-alpha-D-ribose 1-phosphate = 5-(methylsulfanyl)-D-ribulose 1-phosphate. The protein operates within amino-acid biosynthesis; L-methionine biosynthesis via salvage pathway; L-methionine from S-methyl-5-thio-alpha-D-ribose 1-phosphate: step 1/6. In terms of biological role, catalyzes the interconversion of methylthioribose-1-phosphate (MTR-1-P) into methylthioribulose-1-phosphate (MTRu-1-P). The chain is Methylthioribose-1-phosphate isomerase from Bombyx mori (Silk moth).